The following is a 201-amino-acid chain: Orotate phosphoribosyltransferase (201 aa).

Residue 113–121 (EDIITTGKS) participates in 5-phospho-alpha-D-ribose 1-diphosphate binding. Orotate is bound by residues Thr117 and Arg145.

The protein belongs to the purine/pyrimidine phosphoribosyltransferase family. PyrE subfamily. In terms of assembly, homodimer. Mg(2+) serves as cofactor.

It catalyses the reaction orotidine 5'-phosphate + diphosphate = orotate + 5-phospho-alpha-D-ribose 1-diphosphate. The protein operates within pyrimidine metabolism; UMP biosynthesis via de novo pathway; UMP from orotate: step 1/2. Catalyzes the transfer of a ribosyl phosphate group from 5-phosphoribose 1-diphosphate to orotate, leading to the formation of orotidine monophosphate (OMP). The protein is Orotate phosphoribosyltransferase of Helicobacter acinonychis (strain Sheeba).